The primary structure comprises 350 residues: MDSFNYTTPDYGHYDDKDTLDPNTPVDKTSNTLRVPDILALVIFAVVFLVGVLGNALVVWVTAFEVKRTINAIWFLNLAVADFLSCLALPILFTSIVQHHHWPFGGAACRILPSLILLNMYASILLLATISADRFLLVFKPIWCQNFRGAGLAWIACAVAWGLALLLTIPSFLYRVVREEYFPPKVLCGVDYSHDKQRERAVAVVRLVLGFLWPLLTLTICYTFILLRTWSRRATRSTKTLKVVVAVVASFFIFWLPYQVTGIMMSFLEPSSPTFLLLKKLDSLCVSFAYINCCINPIIYVVAGQGFQGRLRKSLPSLLRNVLTEESVVRESKSFTRSTVDTMAEKTQAV.

Residues 1-37 (MDSFNYTTPDYGHYDDKDTLDPNTPVDKTSNTLRVPD) lie on the Extracellular side of the membrane. A required for CHIPS binding region spans residues 10 to 18 (DYGHYDDKD). Sulfotyrosine is present on residues tyrosine 11 and tyrosine 14. Residues 21 to 30 (DPNTPVDKTS) are involved in C5a binding. The chain crosses the membrane as a helical span at residues 38–64 (ILALVIFAVVFLVGVLGNALVVWVTAF). The Cytoplasmic segment spans residues 65-69 (EVKRT). The helical transmembrane segment at 70-93 (INAIWFLNLAVADFLSCLALPILF) threads the bilayer. Topologically, residues 94-110 (TSIVQHHHWPFGGAACR) are extracellular. A disulfide bond links cysteine 109 and cysteine 188. The helical transmembrane segment at 111 to 132 (ILPSLILLNMYASILLLATISA) threads the bilayer. At 133 to 153 (DRFLLVFKPIWCQNFRGAGLA) the chain is on the cytoplasmic side. Residues 154-174 (WIACAVAWGLALLLTIPSFLY) traverse the membrane as a helical segment. Topologically, residues 175–200 (RVVREEYFPPKVLCGVDYSHDKQRER) are extracellular. Residues 201–226 (AVAVVRLVLGFLWPLLTLTICYTFIL) traverse the membrane as a helical segment. At 227 to 242 (LRTWSRRATRSTKTLK) the chain is on the cytoplasmic side. The chain crosses the membrane as a helical span at residues 243 to 265 (VVVAVVASFFIFWLPYQVTGIMM). The Extracellular segment spans residues 266-282 (SFLEPSSPTFLLLKKLD). The chain crosses the membrane as a helical span at residues 283–303 (SLCVSFAYINCCINPIIYVVA). The Cytoplasmic segment spans residues 304-350 (GQGFQGRLRKSLPSLLRNVLTEESVVRESKSFTRSTVDTMAEKTQAV). Serine 314, serine 317, serine 327, serine 332, serine 334, and serine 338 each carry phosphoserine.

This sequence belongs to the G-protein coupled receptor 1 family. As to quaternary structure, homodimer. May also form higher-order oligomers. Interacts (when phosphorylated) with ARRB1 and ARRB2; the interaction is associated with internalization of C5aR. Interacts (via N-terminal domain) with S.aureus chemotaxis inhibitory protein (CHIPS); the interaction blocks the receptor and may thus inhibit the immune response. Post-translationally, sulfation plays a critical role in the association of C5aR with C5a, but no significant role in the ability of the receptor to transduce a signal and mobilize calcium in response to a small peptide agonist. Sulfation at Tyr-14 is important for CHIPS binding. In terms of processing, phosphorylated on serine residues in response to C5a binding, resulting in internalization of the receptor and short-term desensitization to C5a.

The protein localises to the cell membrane. It is found in the cytoplasmic vesicle. In terms of biological role, receptor for the chemotactic and inflammatory peptide anaphylatoxin C5a. The ligand interacts with at least two sites on the receptor: a high-affinity site on the extracellular N-terminus, and a second site in the transmembrane region which activates downstream signaling events. Receptor activation stimulates chemotaxis, granule enzyme release, intracellular calcium release and superoxide anion production. This chain is C5a anaphylatoxin chemotactic receptor 1 (C5AR1), found in Gorilla gorilla gorilla (Western lowland gorilla).